Reading from the N-terminus, the 349-residue chain is Protein-glutamate methylesterase/protein-glutamine glutaminase (349 aa).

One can recognise a Response regulatory domain in the interval 5 to 122; the sequence is RVLSVDDSAL…REGMLAYNEM (118 aa). Asp56 is subject to 4-aspartylphosphate. Residues 152–344 form the CheB-type methylesterase domain; that stretch reads LLSSEKLIAI…QQMLAKISAG (193 aa). Active-site residues include Ser164, His190, and Asp286.

The protein belongs to the CheB family. In terms of assembly, interacts with CheA. Binds to a C-terminal pentapeptide sequence carried by certain receptors. Phosphorylated by CheA. Phosphorylation of the N-terminal regulatory domain activates the methylesterase activity.

The protein resides in the cytoplasm. The enzyme catalyses [protein]-L-glutamate 5-O-methyl ester + H2O = L-glutamyl-[protein] + methanol + H(+). The catalysed reaction is L-glutaminyl-[protein] + H2O = L-glutamyl-[protein] + NH4(+). Methylesterase activity is activated via phosphorylation in response to negative chemotactic stimuli and is inhibited in the presence of attractants. Activation requires both CheA and CheW. Functionally, involved in chemotaxis. Part of a chemotaxis signal transduction system that modulates chemotaxis in response to various stimuli. Catalyzes the demethylation of specific methylglutamate residues introduced into the chemoreceptors (methyl-accepting chemotaxis proteins or MCP) by CheR. Also mediates the irreversible deamidation of specific glutamine residues to glutamic acid. Catalyzes its own deactivation by removing the activating phosphoryl group. This chain is Protein-glutamate methylesterase/protein-glutamine glutaminase, found in Escherichia coli (strain K12).